The primary structure comprises 174 residues: Crossover junction endodeoxyribonuclease RuvC (174 aa).

Residues Asp-8, Glu-67, and Asp-139 contribute to the active site. Positions 8, 67, and 139 each coordinate Mg(2+).

The protein belongs to the RuvC family. As to quaternary structure, homodimer which binds Holliday junction (HJ) DNA. The HJ becomes 2-fold symmetrical on binding to RuvC with unstacked arms; it has a different conformation from HJ DNA in complex with RuvA. In the full resolvosome a probable DNA-RuvA(4)-RuvB(12)-RuvC(2) complex forms which resolves the HJ. The cofactor is Mg(2+).

The protein localises to the cytoplasm. It carries out the reaction Endonucleolytic cleavage at a junction such as a reciprocal single-stranded crossover between two homologous DNA duplexes (Holliday junction).. The RuvA-RuvB-RuvC complex processes Holliday junction (HJ) DNA during genetic recombination and DNA repair. Endonuclease that resolves HJ intermediates. Cleaves cruciform DNA by making single-stranded nicks across the HJ at symmetrical positions within the homologous arms, yielding a 5'-phosphate and a 3'-hydroxyl group; requires a central core of homology in the junction. The consensus cleavage sequence is 5'-(A/T)TT(C/G)-3'. Cleavage occurs on the 3'-side of the TT dinucleotide at the point of strand exchange. HJ branch migration catalyzed by RuvA-RuvB allows RuvC to scan DNA until it finds its consensus sequence, where it cleaves and resolves the cruciform DNA. This Pseudomonas putida (strain ATCC 47054 / DSM 6125 / CFBP 8728 / NCIMB 11950 / KT2440) protein is Crossover junction endodeoxyribonuclease RuvC.